The following is a 428-amino-acid chain: GTPase Obg (428 aa).

An Obg domain is found at 1–158 (MFIDKAKVFI…LSIVLELKLL (158 aa)). Residues 159–331 (ADVGLLGFPN…VIKEAARMLK (173 aa)) form the OBG-type G domain. Residues 165 to 172 (GFPNVGKS), 190 to 194 (FTTLK), 212 to 215 (DIPG), 282 to 285 (NKSD), and 312 to 314 (SAA) each bind GTP. 2 residues coordinate Mg(2+): Ser172 and Thr192. Residues 345–428 (MYIPEEKRFT…LNDFEFEYLL (84 aa)) enclose the OCT domain.

This sequence belongs to the TRAFAC class OBG-HflX-like GTPase superfamily. OBG GTPase family. As to quaternary structure, monomer. Requires Mg(2+) as cofactor.

Its subcellular location is the cytoplasm. An essential GTPase which binds GTP, GDP and possibly (p)ppGpp with moderate affinity, with high nucleotide exchange rates and a fairly low GTP hydrolysis rate. Plays a role in control of the cell cycle, stress response, ribosome biogenesis and in those bacteria that undergo differentiation, in morphogenesis control. In Clostridium botulinum (strain Eklund 17B / Type B), this protein is GTPase Obg.